A 159-amino-acid chain; its full sequence is Major allergen Mal d 1 (159 aa).

Belongs to the BetVI family.

This chain is Major allergen Mal d 1, found in Malus domestica (Apple).